The following is a 157-amino-acid chain: MSEKYTNEKYVVTWDMFHMHARKLAERLLPASQWKGIIAVSRGGLFPAAVLARELSIRHVETVCISSYDHDEQGELKVLHAAQTDGEGFIVVDDLVDTGNTAKEIRKMYPKAKFVTVFAKPAGTPLVDDYVIDIPQETWIEQPWDLGITFVPPLARK.

Residues 42–43 (RG) and 93–101 (DDLVDTGNT) each bind 5-phospho-alpha-D-ribose 1-diphosphate. D94 lines the Mg(2+) pocket. Residues D97 and I140 each coordinate guanine. D97 and I140 together coordinate xanthine. Residues 97-101 (DTGNT) and 139-140 (WI) contribute to the GMP site.

This sequence belongs to the purine/pyrimidine phosphoribosyltransferase family. XGPT subfamily. Homotetramer. It depends on Mg(2+) as a cofactor.

The protein localises to the cell inner membrane. It carries out the reaction GMP + diphosphate = guanine + 5-phospho-alpha-D-ribose 1-diphosphate. It catalyses the reaction XMP + diphosphate = xanthine + 5-phospho-alpha-D-ribose 1-diphosphate. The enzyme catalyses IMP + diphosphate = hypoxanthine + 5-phospho-alpha-D-ribose 1-diphosphate. Its pathway is purine metabolism; GMP biosynthesis via salvage pathway; GMP from guanine: step 1/1. It functions in the pathway purine metabolism; XMP biosynthesis via salvage pathway; XMP from xanthine: step 1/1. Functionally, purine salvage pathway enzyme that catalyzes the transfer of the ribosyl-5-phosphate group from 5-phospho-alpha-D-ribose 1-diphosphate (PRPP) to the N9 position of the 6-oxopurines guanine and xanthine to form the corresponding ribonucleotides GMP (guanosine 5'-monophosphate) and XMP (xanthosine 5'-monophosphate), with the release of PPi. To a lesser extent, also acts on hypoxanthine. The polypeptide is Xanthine-guanine phosphoribosyltransferase (Actinobacillus pleuropneumoniae serotype 5b (strain L20)).